Reading from the N-terminus, the 360-residue chain is N5-carboxyaminoimidazole ribonucleotide synthase (360 aa).

Residues arginine 98, lysine 138, 143–149 (GYDGKGQ), 173–176 (EGFV), glutamate 181, histidine 204, and 255–256 (NE) contribute to the ATP site. Residues 102 to 285 (KSMFKDLGIP…QFENHLRAVA (184 aa)) enclose the ATP-grasp domain.

The protein belongs to the PurK/PurT family. Homodimer.

It carries out the reaction 5-amino-1-(5-phospho-beta-D-ribosyl)imidazole + hydrogencarbonate + ATP = 5-carboxyamino-1-(5-phospho-D-ribosyl)imidazole + ADP + phosphate + 2 H(+). It functions in the pathway purine metabolism; IMP biosynthesis via de novo pathway; 5-amino-1-(5-phospho-D-ribosyl)imidazole-4-carboxylate from 5-amino-1-(5-phospho-D-ribosyl)imidazole (N5-CAIR route): step 1/2. Catalyzes the ATP-dependent conversion of 5-aminoimidazole ribonucleotide (AIR) and HCO(3)(-) to N5-carboxyaminoimidazole ribonucleotide (N5-CAIR). The protein is N5-carboxyaminoimidazole ribonucleotide synthase of Pseudomonas aeruginosa (strain ATCC 15692 / DSM 22644 / CIP 104116 / JCM 14847 / LMG 12228 / 1C / PRS 101 / PAO1).